The sequence spans 240 residues: Terpene cyclase cdmG (240 aa).

The next 6 helical transmembrane spans lie at 16 to 36 (YASIVDAATLVQGFLWALNYG), 48 to 68 (YGMAIFPLCCNYAWELVYTVI), 78 to 98 (IIMTTWLILNSIMMGFTIKFA), 112 to 132 (IPFIFLAGVAAFVIAQLALAA), 134 to 154 (VGPGLAMNWVAALCYLLLTIG), and 167 to 187 (GVSYTMWLSRFVGTYVGVICV). Asparagine 197 carries an N-linked (GlcNAc...) asparagine glycan. Residues 205 to 225 (IMKCFSGISLAVEIVYGVTLW) traverse the membrane as a helical segment.

This sequence belongs to the paxB family.

It localises to the membrane. It carries out the reaction verruculide C epoxide = 3-hydroxypentacecilide A. It participates in secondary metabolite biosynthesis; terpenoid biosynthesis. Terpene cyclase; part of the gene cluster that mediates the biosynthesis of chrodrimanin B, a meroterpenoid that acts as a potent blocker of insect GABA-gated chloride channels. The first step of the pathway is the biosynthesis of 6-hydroxymellein by the polyketide synthase cdmE. The prenyltransferase cdmH acts as a 6-hydroxymellein 5-farnesyltransferase and produces the hydrophobic metabolite verruculide C. The FAD-dependent monooxygenase cdmI further converts verruculide C into verruculide B. The terpene cyclase cdmG then produced the pentacyclic molecule 3-hydroxypentacecilide A, the backbone structure of chrodrimanin B, via folding the farnesyl moiety of the substrate into the chair-boat conformation. The short-chain dehydrogenase/reductase cdmF functions as the 3-OH dehydrogenase that oxidizes the C-3 hydroxyl group of 3-hydroxypentacecilide A and produces chrodrimanin C, the dehydrogenated product of 3-hydroxypentacecilide A. The cytochrome P450 monooxygenase cdmJ then accepts both 3-hydroxypentacecilide A and chrodrimanin C and functions as a C-7-beta-hydroxylase to produce respectively chrodrimanin H and chrodrimanin F. The dioxygenase cdmA accepts chrodrimanin H to afford chrodrimanin E, which is further transformed to chrodrimanin A by the dioxygenase cdmD. CdmA can also accept chrodrimanin C as substrate to convert it into verruculide A, which is further converted into chrodrimanin T by cdmD. The last step of the biosynthesis is proposed to be performed by the acetyltransferase cdmC which acetylates chrodrimanin A to yield chrodrimanin B. The pathway may also lead to the production of additional shunt products, including chrodrimanins T and U. The chain is Terpene cyclase cdmG from Talaromyces verruculosus (Penicillium verruculosum).